The chain runs to 97 residues: Large ribosomal subunit protein uL23 (97 aa).

This sequence belongs to the universal ribosomal protein uL23 family. Part of the 50S ribosomal subunit. Contacts protein L29, and trigger factor when it is bound to the ribosome.

In terms of biological role, one of the early assembly proteins it binds 23S rRNA. One of the proteins that surrounds the polypeptide exit tunnel on the outside of the ribosome. Forms the main docking site for trigger factor binding to the ribosome. The sequence is that of Large ribosomal subunit protein uL23 from Brucella anthropi (strain ATCC 49188 / DSM 6882 / CCUG 24695 / JCM 21032 / LMG 3331 / NBRC 15819 / NCTC 12168 / Alc 37) (Ochrobactrum anthropi).